Consider the following 336-residue polypeptide: Protein REVEILLE 7-like (336 aa).

The region spanning 60–114 is the HTH myb-type domain; that stretch reads TVTKQREKWSEEEHDRFLEAIKLYGRGWRQIQEHIGTKTAVQIRSHAQKFFSKMA. A DNA-binding region (H-T-H motif) is located at residues 87–110; sequence WRQIQEHIGTKTAVQIRSHAQKFF. The interval 114 to 197 is disordered; it reads AQEADSRSEG…KQPFKDDSDI (84 aa). Over residues 134 to 144 the composition is skewed to basic residues; sequence RPKRKPAHPYP. Residues 145 to 158 are compositionally biased toward pro residues; the sequence is RKSPVPYTQSPPPN. A compositionally biased stretch (polar residues) spans 167-189; sequence KSPTSVLSSFGSEDQNNYTTSKQ.

The protein localises to the nucleus. Its function is as follows. Probable transcription factor. The sequence is that of Protein REVEILLE 7-like (RVE7L) from Arabidopsis thaliana (Mouse-ear cress).